A 200-amino-acid polypeptide reads, in one-letter code: uncharacterized protein (200 aa).

This is an uncharacterized protein from Amazona oratrix (yellow-headed parrot).